A 564-amino-acid chain; its full sequence is Potassium-transporting ATPase potassium-binding subunit (564 aa).

Helical transmembrane passes span 4 to 24, 67 to 87, 135 to 155, 179 to 199, 258 to 278, 286 to 306, 382 to 402, 420 to 440, 487 to 507, and 528 to 548; these read YDYW…PFLG, TLAL…ILLF, VGLT…LVAL, LYGL…QGVP, FEVA…GHYV, AIIG…LWAE, AGLY…GLMI, LLVV…AIAA, LMLG…VLAL, and GPLF…LTFL.

It belongs to the KdpA family. The system is composed of three essential subunits: KdpA, KdpB and KdpC.

The protein localises to the cell inner membrane. Functionally, part of the high-affinity ATP-driven potassium transport (or Kdp) system, which catalyzes the hydrolysis of ATP coupled with the electrogenic transport of potassium into the cytoplasm. This subunit binds the periplasmic potassium ions and delivers the ions to the membrane domain of KdpB through an intramembrane tunnel. The protein is Potassium-transporting ATPase potassium-binding subunit of Pseudomonas fluorescens (strain Pf0-1).